We begin with the raw amino-acid sequence, 284 residues long: 2-dehydro-3-deoxyphosphooctonate aldolase (284 aa).

This sequence belongs to the KdsA family.

Its subcellular location is the cytoplasm. It catalyses the reaction D-arabinose 5-phosphate + phosphoenolpyruvate + H2O = 3-deoxy-alpha-D-manno-2-octulosonate-8-phosphate + phosphate. Its pathway is carbohydrate biosynthesis; 3-deoxy-D-manno-octulosonate biosynthesis; 3-deoxy-D-manno-octulosonate from D-ribulose 5-phosphate: step 2/3. It functions in the pathway bacterial outer membrane biogenesis; lipopolysaccharide biosynthesis. The polypeptide is 2-dehydro-3-deoxyphosphooctonate aldolase (Haemophilus influenzae (strain PittEE)).